A 376-amino-acid polypeptide reads, in one-letter code: MSDETTSSPSPAPAKKKQNLGWMEWMRGWSSVFGEILFQRITASHLENPLPLPSVNDLTCVVTGSTSGIGRETARQLAEAGAHVVMAVRNTKAAQELILQWQNEWSGKGLPLNIEAMEIDLLSLDSVARFAEAFNARLGPLHVLINNAGMFAMGEAQKFSEEGYEQHMQVNHLAPALLSVLLLPSLIRGSPSRIINVNSVMHSVGFVDPDDMNVVSGRRKYSSLIGYSSSKLAQIMFSSILFKKLPLETGVSVVCLSPGVVLTNVARDLSRILQALYAVIPYFIFSPQEGCRSSLFSATDPQIPEYWETLKNDDWPVCPFISQDCRPANPSEEAHNTETAQRVWKKTLELVGLPLDAVEKLIEGENIQCRYGAQHE.

An N-acetylserine modification is found at Ser-2. An NAD(+)-binding site is contributed by 61–85 (VVTGSTSGIGRETARQLAEAGAHVV). Ser-199 provides a ligand contact to substrate. The active-site Proton acceptor is Tyr-227.

This sequence belongs to the short-chain dehydrogenases/reductases (SDR) family. As to expression, expressed in roots, stems, leaves and flowers and, at lower levels, in siliques.

Functionally, putative oxidoreductase. Required for vegetative shoot apex development, especially during leaf positioning and for shoot apical meristem (SAM) maintenance. The chain is Dehydrogenase/reductase SDR family member FEY from Arabidopsis thaliana (Mouse-ear cress).